A 333-amino-acid chain; its full sequence is Methionyl-tRNA formyltransferase (333 aa).

Residue 106 to 109 (SLLP) participates in (6S)-5,6,7,8-tetrahydrofolate binding.

This sequence belongs to the Fmt family.

It carries out the reaction L-methionyl-tRNA(fMet) + (6R)-10-formyltetrahydrofolate = N-formyl-L-methionyl-tRNA(fMet) + (6S)-5,6,7,8-tetrahydrofolate + H(+). Functionally, attaches a formyl group to the free amino group of methionyl-tRNA(fMet). The formyl group appears to play a dual role in the initiator identity of N-formylmethionyl-tRNA by promoting its recognition by IF2 and preventing the misappropriation of this tRNA by the elongation apparatus. The protein is Methionyl-tRNA formyltransferase of Elusimicrobium minutum (strain Pei191).